Reading from the N-terminus, the 338-residue chain is Putative peptide import ATP-binding protein BruAb2_0796 (338 aa).

Positions 7–263 (LDIEGLRTVF…PRHPYTMGLL (257 aa)) constitute an ABC transporter domain. 43–50 (GESGSGKS) provides a ligand contact to ATP.

It belongs to the ABC transporter superfamily. As to quaternary structure, the complex is composed of two ATP-binding proteins (BruAb2_0796 and BruAb2_0797), two transmembrane proteins (BruAb2_0794) and a solute-binding protein (BruAb2_0792).

The protein localises to the cell inner membrane. Functionally, probably part of an ABC transporter complex that could be involved in peptide import. Probably responsible for energy coupling to the transport system. The polypeptide is Putative peptide import ATP-binding protein BruAb2_0796 (Brucella abortus biovar 1 (strain 9-941)).